We begin with the raw amino-acid sequence, 207 residues long: Thiamine-phosphate synthase (207 aa).

Residues 36–40 and Asn-68 contribute to the 4-amino-2-methyl-5-(diphosphooxymethyl)pyrimidine site; that span reads QLRLK. 2 residues coordinate Mg(2+): Asp-69 and Asp-88. Thr-107 contributes to the 4-amino-2-methyl-5-(diphosphooxymethyl)pyrimidine binding site. 134–136 is a binding site for 2-[(2R,5Z)-2-carboxy-4-methylthiazol-5(2H)-ylidene]ethyl phosphate; that stretch reads TGT. A 4-amino-2-methyl-5-(diphosphooxymethyl)pyrimidine-binding site is contributed by Lys-137. Gly-164 serves as a coordination point for 2-[(2R,5Z)-2-carboxy-4-methylthiazol-5(2H)-ylidene]ethyl phosphate.

This sequence belongs to the thiamine-phosphate synthase family. Mg(2+) serves as cofactor.

It catalyses the reaction 2-[(2R,5Z)-2-carboxy-4-methylthiazol-5(2H)-ylidene]ethyl phosphate + 4-amino-2-methyl-5-(diphosphooxymethyl)pyrimidine + 2 H(+) = thiamine phosphate + CO2 + diphosphate. The catalysed reaction is 2-(2-carboxy-4-methylthiazol-5-yl)ethyl phosphate + 4-amino-2-methyl-5-(diphosphooxymethyl)pyrimidine + 2 H(+) = thiamine phosphate + CO2 + diphosphate. The enzyme catalyses 4-methyl-5-(2-phosphooxyethyl)-thiazole + 4-amino-2-methyl-5-(diphosphooxymethyl)pyrimidine + H(+) = thiamine phosphate + diphosphate. It functions in the pathway cofactor biosynthesis; thiamine diphosphate biosynthesis; thiamine phosphate from 4-amino-2-methyl-5-diphosphomethylpyrimidine and 4-methyl-5-(2-phosphoethyl)-thiazole: step 1/1. Condenses 4-methyl-5-(beta-hydroxyethyl)thiazole monophosphate (THZ-P) and 2-methyl-4-amino-5-hydroxymethyl pyrimidine pyrophosphate (HMP-PP) to form thiamine monophosphate (TMP). In Rhodospirillum centenum (strain ATCC 51521 / SW), this protein is Thiamine-phosphate synthase.